We begin with the raw amino-acid sequence, 186 residues long: Temperature-induced lipocalin-1 (186 aa).

An HPR (Hydrophobic proline-rich) motif is present at residues 90-97 (PPFLPIIP). The interval 154-174 (KLHKTPQSDTPPESNTAPEDS) is disordered. Polar residues predominate over residues 158–171 (TPQSDTPPESNTAP).

It belongs to the calycin superfamily. Lipocalin family. Expressed ubiquitously at similar levels, except in dry seeds (at protein level). Present in seeds.

It is found in the cell membrane. Its subcellular location is the cytoplasm. It localises to the plastid. The protein resides in the chloroplast membrane. In terms of biological role, involved in basal (BT) and acquired thermotolerance (AT), probably by preventing plasma membrane lipids peroxidation induced by severe heat-shock (HS). Lipocalin that confers protection against oxidative stress caused by heat, freezing, paraquat and light. Confers resistance to high salt (NaCl) levels, probably by protecting chloroplasts from ion toxicity via ion homeostasis maintenance. Required for seed longevity by ensuring polyunsaturated lipids integrity. The chain is Temperature-induced lipocalin-1 from Arabidopsis thaliana (Mouse-ear cress).